The sequence spans 163 residues: ATP synthase subunit b 1 (163 aa).

The chain crosses the membrane as a helical span at residues 6-26 (LAELWVAVAFLLFVGILIYVG).

It belongs to the ATPase B chain family. F-type ATPases have 2 components, F(1) - the catalytic core - and F(0) - the membrane proton channel. F(1) has five subunits: alpha(3), beta(3), gamma(1), delta(1), epsilon(1). F(0) has three main subunits: a(1), b(2) and c(10-14). The alpha and beta chains form an alternating ring which encloses part of the gamma chain. F(1) is attached to F(0) by a central stalk formed by the gamma and epsilon chains, while a peripheral stalk is formed by the delta and b chains.

Its subcellular location is the cell inner membrane. In terms of biological role, f(1)F(0) ATP synthase produces ATP from ADP in the presence of a proton or sodium gradient. F-type ATPases consist of two structural domains, F(1) containing the extramembraneous catalytic core and F(0) containing the membrane proton channel, linked together by a central stalk and a peripheral stalk. During catalysis, ATP synthesis in the catalytic domain of F(1) is coupled via a rotary mechanism of the central stalk subunits to proton translocation. Functionally, component of the F(0) channel, it forms part of the peripheral stalk, linking F(1) to F(0). This is ATP synthase subunit b 1 from Xanthobacter autotrophicus (strain ATCC BAA-1158 / Py2).